Here is a 91-residue protein sequence, read N- to C-terminus: Small ribosomal subunit protein bS18 (91 aa).

This sequence belongs to the bacterial ribosomal protein bS18 family. Part of the 30S ribosomal subunit. Forms a tight heterodimer with protein bS6.

Its function is as follows. Binds as a heterodimer with protein bS6 to the central domain of the 16S rRNA, where it helps stabilize the platform of the 30S subunit. The chain is Small ribosomal subunit protein bS18 from Paraburkholderia xenovorans (strain LB400).